The chain runs to 138 residues: ATP synthase epsilon chain (138 aa).

The protein belongs to the ATPase epsilon chain family. In terms of assembly, F-type ATPases have 2 components, CF(1) - the catalytic core - and CF(0) - the membrane proton channel. CF(1) has five subunits: alpha(3), beta(3), gamma(1), delta(1), epsilon(1). CF(0) has four main subunits: a(1), b(1), b'(1) and c(9-12).

It localises to the cellular thylakoid membrane. Functionally, produces ATP from ADP in the presence of a proton gradient across the membrane. Its function is as follows. The complex from the organism is particularly stable to disruption and remains functional after 6 hours at 55 degrees Celsius. This is ATP synthase epsilon chain from Thermosynechococcus vestitus (strain NIES-2133 / IAM M-273 / BP-1).